Consider the following 221-residue polypeptide: Ribosomal RNA large subunit methyltransferase E (221 aa).

S-adenosyl-L-methionine contacts are provided by Gly-60, Trp-62, Asp-89, Asp-105, and Asp-134. Lys-174 (proton acceptor) is an active-site residue.

This sequence belongs to the class I-like SAM-binding methyltransferase superfamily. RNA methyltransferase RlmE family.

It is found in the cytoplasm. It catalyses the reaction uridine(2552) in 23S rRNA + S-adenosyl-L-methionine = 2'-O-methyluridine(2552) in 23S rRNA + S-adenosyl-L-homocysteine + H(+). Functionally, specifically methylates the uridine in position 2552 of 23S rRNA at the 2'-O position of the ribose in the fully assembled 50S ribosomal subunit. In Cupriavidus necator (strain ATCC 17699 / DSM 428 / KCTC 22496 / NCIMB 10442 / H16 / Stanier 337) (Ralstonia eutropha), this protein is Ribosomal RNA large subunit methyltransferase E.